A 371-amino-acid polypeptide reads, in one-letter code: Queuine tRNA-ribosyltransferase (371 aa).

The Proton acceptor role is filled by D89. Substrate contacts are provided by residues 89–93 (DSGGF), D143, Q185, and G212. The tract at residues 243-249 (GVGTPED) is RNA binding. The active-site Nucleophile is the D262. The interval 267–271 (TRNAR) is RNA binding; important for wobble base 34 recognition. Zn(2+) contacts are provided by C300, C302, C305, and H331.

This sequence belongs to the queuine tRNA-ribosyltransferase family. In terms of assembly, homodimer. Within each dimer, one monomer is responsible for RNA recognition and catalysis, while the other monomer binds to the replacement base PreQ1. It depends on Zn(2+) as a cofactor.

The enzyme catalyses 7-aminomethyl-7-carbaguanine + guanosine(34) in tRNA = 7-aminomethyl-7-carbaguanosine(34) in tRNA + guanine. Its pathway is tRNA modification; tRNA-queuosine biosynthesis. In terms of biological role, catalyzes the base-exchange of a guanine (G) residue with the queuine precursor 7-aminomethyl-7-deazaguanine (PreQ1) at position 34 (anticodon wobble position) in tRNAs with GU(N) anticodons (tRNA-Asp, -Asn, -His and -Tyr). Catalysis occurs through a double-displacement mechanism. The nucleophile active site attacks the C1' of nucleotide 34 to detach the guanine base from the RNA, forming a covalent enzyme-RNA intermediate. The proton acceptor active site deprotonates the incoming PreQ1, allowing a nucleophilic attack on the C1' of the ribose to form the product. After dissociation, two additional enzymatic reactions on the tRNA convert PreQ1 to queuine (Q), resulting in the hypermodified nucleoside queuosine (7-(((4,5-cis-dihydroxy-2-cyclopenten-1-yl)amino)methyl)-7-deazaguanosine). The sequence is that of Queuine tRNA-ribosyltransferase from Nitrosomonas europaea (strain ATCC 19718 / CIP 103999 / KCTC 2705 / NBRC 14298).